We begin with the raw amino-acid sequence, 225 residues long: MKKLLLIAATSATILSSSISFAECMDNEWYLRVDAGVAMFNKEKDKTIGVKLKSNKAMPIDLGIGYYIAENVRADLTLGTTIGGKLKKSGAATNAHFTGTNVLVSHKPIVTRLLINGYVDLTSFDMFDIFVGAGVGPALVKEKISGASGLASNTTNTKNKTNVSYKLIFGTAAQVADGVKVELAYSWIDDGRTKSKHVIHEGASVQTGGMRYQSHNITVGLRFGI.

A signal peptide spans 1–22; sequence MKKLLLIAATSATILSSSISFA.

The polypeptide is Putative adhesin RT0816 (Rickettsia typhi (strain ATCC VR-144 / Wilmington)).